Consider the following 109-residue polypeptide: Putative antitoxin HigA3 (109 aa).

In terms of domain architecture, HTH cro/C1-type spans 41–97; the sequence is LAEIRKALGHARQADVAALMGVSQARVSKLESGDLSHTELGTLQAYVAALGGHLRIV. The segment at residues 53 to 72 is a DNA-binding region (H-T-H motif); sequence QADVAALMGVSQARVSKLES.

In terms of biological role, putative antitoxin component of a type II toxin-antitoxin (TA) system. Its cognate toxin would be HigB3. This chain is Putative antitoxin HigA3, found in Mycobacterium tuberculosis (strain ATCC 25618 / H37Rv).